A 184-amino-acid polypeptide reads, in one-letter code: Photosystem I assembly protein Ycf4 (184 aa).

2 helical membrane passes run 21 to 43 (NFCW…ISSY) and 58 to 80 (LFFP…SSYL).

It belongs to the Ycf4 family.

It localises to the plastid. It is found in the chloroplast thylakoid membrane. Its function is as follows. Seems to be required for the assembly of the photosystem I complex. The protein is Photosystem I assembly protein Ycf4 of Carpobrotus chilensis (Sea fig).